The following is an 809-amino-acid chain: Hydrazine synthase subunit alpha (809 aa).

The signal sequence occupies residues 1-27 (MGKRKLGVIASAFVAGALVCGSTLVNA). A Zn(2+)-binding site is contributed by Cys303. Residues Cys583 and Cys586 each contribute to the heme site. Residue His587 participates in Zn(2+) binding. Residues Tyr591, Cys685, Cys688, His689, and His772 each coordinate heme. One can recognise a Cytochrome c domain in the interval 633–792 (KGVKHGEDVV…AIVEWIDLGA (160 aa)).

As to quaternary structure, part of the hydrazine synthase complex that forms an elongated dimer of heterotrimers composed of one alpha, one beta and one gamma subunit. Heme c serves as cofactor.

It is found in the anammoxosome. It carries out the reaction hydrazine + 3 Fe(III)-[cytochrome c] + H2O = nitric oxide + 3 Fe(II)-[cytochrome c] + NH4(+) + 2 H(+). Its pathway is nitrogen metabolism. Component of the hydrazine synthase complex that catalyzes the condensation of nitric oxide (NO) with ammonium to form hydrazine. The alpha subunit catalyzes the second half-reaction, i.e. the condensation of hydroxylamine formed in the active site of the gamma subunit with ammonia, yielding hydrazine. Is involved in anaerobic ammonium oxidation (anammox), a biological process in which nitrite is used as the electron acceptor in the conversion of ammonium to dinitrogen gas (N2) and water; this bacterial process has a major role in the Earth's nitrogen cycle and has been estimated to synthesize up to 50% of the dinitrogen gas emitted into our atmosphere from the oceans. The polypeptide is Hydrazine synthase subunit alpha (Kuenenia stuttgartiensis).